Consider the following 419-residue polypeptide: Methylthioribose kinase (419 aa).

ATP is bound by residues Asn49 and Lys64. Position 239 (Asp239) interacts with substrate. 256–258 (DPE) lines the ATP pocket. Residue Arg365 participates in substrate binding.

The protein belongs to the methylthioribose kinase family. Homodimer.

The catalysed reaction is 5-(methylsulfanyl)-D-ribose + ATP = 5-(methylsulfanyl)-alpha-D-ribose 1-phosphate + ADP + H(+). It carries out the reaction 5-deoxy-D-ribose + ATP = 5-deoxy-alpha-D-ribose 1-phosphate + ADP + H(+). Its pathway is amino-acid biosynthesis; L-methionine biosynthesis via salvage pathway; S-methyl-5-thio-alpha-D-ribose 1-phosphate from S-methyl-5'-thioadenosine (hydrolase route): step 2/2. Catalyzes the phosphorylation of methylthioribose into methylthioribose-1-phosphate. Also catalyzes the phosphorylation of 5-deoxyribose to 5-deoxyribose-1-phosphate. Part of a bifunctional DHAP-shunt salvage pathway for SAM by-products. The polypeptide is Methylthioribose kinase (Escherichia coli O45:K1 (strain S88 / ExPEC)).